A 526-amino-acid polypeptide reads, in one-letter code: Flavonoid 3'-monooxygenase CYP75B3 (526 aa).

The helical transmembrane segment at 6–26 (LPLLLGSLAVSAAVWYLVYFL) threads the bilayer. Residue Cys461 participates in heme binding.

It belongs to the cytochrome P450 family. Heme serves as cofactor.

It localises to the membrane. The enzyme catalyses a 3'-unsubstituted flavone + reduced [NADPH--hemoprotein reductase] + O2 = a 3'-hydroxyflavone + oxidized [NADPH--hemoprotein reductase] + H2O + H(+). It functions in the pathway secondary metabolite biosynthesis; flavonoid biosynthesis. Its function is as follows. Catalyzes the 3'-hydroxylation of the flavonoid B-ring to the 3',4'-hydroxylated state. Catalyzes the 3'-hydroxylation of apigenin to generate luteolin. This chain is Flavonoid 3'-monooxygenase CYP75B3, found in Oryza sativa subsp. japonica (Rice).